The primary structure comprises 211 residues: Redox-sensing transcriptional repressor Rex (211 aa).

The H-T-H motif DNA-binding region spans 17–56 (KYHRYLEELLRNEVDRISSKELSKKIGFTASQIRQDFNCF). 91–96 (GGGNIG) is a binding site for NAD(+).

This sequence belongs to the transcriptional regulatory Rex family. In terms of assembly, homodimer.

It localises to the cytoplasm. In terms of biological role, modulates transcription in response to changes in cellular NADH/NAD(+) redox state. The sequence is that of Redox-sensing transcriptional repressor Rex from Clostridium tetani (strain Massachusetts / E88).